The chain runs to 550 residues: Arginine--tRNA ligase (550 aa).

The 'HIGH' region motif lies at 130–140; the sequence is ANPTGPIHIGG.

Belongs to the class-I aminoacyl-tRNA synthetase family. Monomer.

The protein resides in the cytoplasm. The enzyme catalyses tRNA(Arg) + L-arginine + ATP = L-arginyl-tRNA(Arg) + AMP + diphosphate. The chain is Arginine--tRNA ligase from Mycobacterium marinum (strain ATCC BAA-535 / M).